A 409-amino-acid chain; its full sequence is Thiaminase-1 (409 aa).

The signal sequence occupies residues 1–29 (MSKVKGFIYKPLMVMLALLLVVVSPAGAG). Residue Cys143 is the Nucleophile of the active site. The Proton acceptor role is filled by Glu271.

Monomer.

It is found in the secreted. It catalyses the reaction pyridine + thiamine = heteropyrithiamine + 5-(2-hydroxyethyl)-4-methylthiazole. Functionally, degrades thiamine by replacing its thiazole moiety with a wide range of nucleophiles. This Paenibacillus thiaminolyticus (Bacillus thiaminolyticus) protein is Thiaminase-1.